A 344-amino-acid chain; its full sequence is Biotin synthase (344 aa).

A Radical SAM core domain is found at 40 to 267; that stretch reads AEVQVSTLLS…KSMVRLSAGR (228 aa). Residues C55, C59, and C62 each contribute to the [4Fe-4S] cluster site. [2Fe-2S] cluster is bound by residues C99, C130, C190, and R262.

This sequence belongs to the radical SAM superfamily. Biotin synthase family. Homodimer. [4Fe-4S] cluster is required as a cofactor. [2Fe-2S] cluster serves as cofactor.

The catalysed reaction is (4R,5S)-dethiobiotin + (sulfur carrier)-SH + 2 reduced [2Fe-2S]-[ferredoxin] + 2 S-adenosyl-L-methionine = (sulfur carrier)-H + biotin + 2 5'-deoxyadenosine + 2 L-methionine + 2 oxidized [2Fe-2S]-[ferredoxin]. It participates in cofactor biosynthesis; biotin biosynthesis; biotin from 7,8-diaminononanoate: step 2/2. Functionally, catalyzes the conversion of dethiobiotin (DTB) to biotin by the insertion of a sulfur atom into dethiobiotin via a radical-based mechanism. The protein is Biotin synthase of Xanthomonas campestris pv. campestris (strain 8004).